We begin with the raw amino-acid sequence, 145 residues long: MGSETKHSAKVKIVTRESPPSAKEHMRPTKTQILVPPTQSLPNGKKPNFGKSTKQRREPRERTSKTGHEDDKATMVTVNIDAFLHDKAPKKKSCKYKKKKTRQYQDRAAASIDSKPHVAGHTAFAGASFTTDIPHEAALPKPSFV.

2 disordered regions span residues 1–74 and 89–115; these read MGSE…DKAT and PKKKSCKYKKKKTRQYQDRAAASIDSK. A compositionally biased stretch (polar residues) spans 29-42; it reads TKTQILVPPTQSLP. Basic and acidic residues predominate over residues 55–73; that stretch reads QRREPRERTSKTGHEDDKA. The span at 89 to 102 shows a compositional bias: basic residues; it reads PKKKSCKYKKKKTR.

It belongs to the EDC family.

The protein localises to the cytoplasm. It is found in the nucleus. MRNA-binding protein which stimulates mRNA decapping by DCP1 and DCP2. The protein is Enhancer of mRNA-decapping protein 2 (EDC2) of Saccharomyces cerevisiae (strain ATCC 204508 / S288c) (Baker's yeast).